Here is a 100-residue protein sequence, read N- to C-terminus: NADH-quinone oxidoreductase subunit K 1 (100 aa).

A run of 3 helical transmembrane segments spans residues Leu-4 to Val-24, Ile-29 to Leu-49, and Ile-60 to Met-80.

The protein belongs to the complex I subunit 4L family. As to quaternary structure, NDH-1 is composed of 14 different subunits. Subunits NuoA, H, J, K, L, M, N constitute the membrane sector of the complex.

Its subcellular location is the cell inner membrane. It carries out the reaction a quinone + NADH + 5 H(+)(in) = a quinol + NAD(+) + 4 H(+)(out). In terms of biological role, NDH-1 shuttles electrons from NADH, via FMN and iron-sulfur (Fe-S) centers, to quinones in the respiratory chain. The immediate electron acceptor for the enzyme in this species is believed to be ubiquinone. Couples the redox reaction to proton translocation (for every two electrons transferred, four hydrogen ions are translocated across the cytoplasmic membrane), and thus conserves the redox energy in a proton gradient. The chain is NADH-quinone oxidoreductase subunit K 1 from Geobacter sulfurreducens (strain ATCC 51573 / DSM 12127 / PCA).